Here is a 481-residue protein sequence, read N- to C-terminus: Polygalacturonase QRT3 (481 aa).

Residues 1–27 form the signal peptide; that stretch reads MELRKSQVAMPVFLAIMSLMVSQVVFA. 3 PbH1 repeats span residues 203–226, 261–282, and 356–377; these read SLRT…LVKS, GNDN…MVSG, and IRGV…QIVQ. N-linked (GlcNAc...) asparagine glycans are attached at residues asparagine 415 and asparagine 455.

The protein belongs to the glycosyl hydrolase 28 family. As to expression, expressed in the tapetum cells in the anthers and in the ovules of open flowers.

The protein localises to the secreted. Its subcellular location is the cell wall. It catalyses the reaction (1,4-alpha-D-galacturonosyl)n+m + H2O = (1,4-alpha-D-galacturonosyl)n + (1,4-alpha-D-galacturonosyl)m.. Its function is as follows. Polygalacturonase required for degrading the pollen mother cell wall during microspore development. This is Polygalacturonase QRT3 (QRT3) from Arabidopsis thaliana (Mouse-ear cress).